The primary structure comprises 305 residues: Thymidylate synthase (305 aa).

DUMP contacts are provided by residues Arg-26 and 160–161; that span reads RR. Cys-180 (nucleophile) is an active-site residue. DUMP is bound by residues 207–210, Asn-218, and 248–250; these read RSCD and HLY. Asp-210 is a (6R)-5,10-methylene-5,6,7,8-tetrahydrofolate binding site. Ala-304 provides a ligand contact to (6R)-5,10-methylene-5,6,7,8-tetrahydrofolate.

It belongs to the thymidylate synthase family. Bacterial-type ThyA subfamily. Homodimer.

The protein localises to the cytoplasm. The enzyme catalyses dUMP + (6R)-5,10-methylene-5,6,7,8-tetrahydrofolate = 7,8-dihydrofolate + dTMP. Its pathway is pyrimidine metabolism; dTTP biosynthesis. Catalyzes the reductive methylation of 2'-deoxyuridine-5'-monophosphate (dUMP) to 2'-deoxythymidine-5'-monophosphate (dTMP) while utilizing 5,10-methylenetetrahydrofolate (mTHF) as the methyl donor and reductant in the reaction, yielding dihydrofolate (DHF) as a by-product. This enzymatic reaction provides an intracellular de novo source of dTMP, an essential precursor for DNA biosynthesis. In Sinorhizobium fredii (strain NBRC 101917 / NGR234), this protein is Thymidylate synthase.